Here is a 270-residue protein sequence, read N- to C-terminus: MPELPEVETTRRGIAPHLEGQKVSRVIVRDRRLRWPIPEDLDVRLSGQRIVLVERRAKYLLINAEVGTLISHLGMSGNLRLVEVGLPAAKHEHVDIELESGLALRYTDPRRFGAMLWSHDPLNHELLVRLGPEPLTDLFDGERLYQLSRGRSMAVKPFIMDNAVVVGVGNIYATEALFAAGIDPRREAKGISRARYLKLAIEIKRILAAAIERGGTTLRDFIGGDGQPGYFQQELFVYGRGGENCKVCGTGLREIKLGQRASVYCPRCQS.

Catalysis depends on proline 2, which acts as the Schiff-base intermediate with DNA. Residue glutamate 3 is the Proton donor of the active site. Lysine 58 serves as the catalytic Proton donor; for beta-elimination activity. Residues histidine 91, arginine 110, and arginine 151 each contribute to the DNA site. The FPG-type zinc-finger motif lies at 236-270; it reads FVYGRGGENCKVCGTGLREIKLGQRASVYCPRCQS. The active-site Proton donor; for delta-elimination activity is the arginine 260.

It belongs to the FPG family. In terms of assembly, monomer. It depends on Zn(2+) as a cofactor.

It catalyses the reaction Hydrolysis of DNA containing ring-opened 7-methylguanine residues, releasing 2,6-diamino-4-hydroxy-5-(N-methyl)formamidopyrimidine.. The catalysed reaction is 2'-deoxyribonucleotide-(2'-deoxyribose 5'-phosphate)-2'-deoxyribonucleotide-DNA = a 3'-end 2'-deoxyribonucleotide-(2,3-dehydro-2,3-deoxyribose 5'-phosphate)-DNA + a 5'-end 5'-phospho-2'-deoxyribonucleoside-DNA + H(+). In terms of biological role, involved in base excision repair of DNA damaged by oxidation or by mutagenic agents. Acts as a DNA glycosylase that recognizes and removes damaged bases. Has a preference for oxidized purines, such as 7,8-dihydro-8-oxoguanine (8-oxoG). Has AP (apurinic/apyrimidinic) lyase activity and introduces nicks in the DNA strand. Cleaves the DNA backbone by beta-delta elimination to generate a single-strand break at the site of the removed base with both 3'- and 5'-phosphates. The protein is Formamidopyrimidine-DNA glycosylase of Pseudomonas fluorescens (strain ATCC BAA-477 / NRRL B-23932 / Pf-5).